The following is a 100-amino-acid chain: NADH-quinone oxidoreductase subunit K (100 aa).

The next 3 helical transmembrane spans lie at 4–24 (LSHG…GMII), 28–48 (LLFM…AFVV), and 60–80 (VMYI…LALL).

Belongs to the complex I subunit 4L family. In terms of assembly, NDH-1 is composed of 13 different subunits. Subunits NuoA, H, J, K, L, M, N constitute the membrane sector of the complex.

The protein resides in the cell inner membrane. The enzyme catalyses a quinone + NADH + 5 H(+)(in) = a quinol + NAD(+) + 4 H(+)(out). NDH-1 shuttles electrons from NADH, via FMN and iron-sulfur (Fe-S) centers, to quinones in the respiratory chain. The immediate electron acceptor for the enzyme in this species is believed to be ubiquinone. Couples the redox reaction to proton translocation (for every two electrons transferred, four hydrogen ions are translocated across the cytoplasmic membrane), and thus conserves the redox energy in a proton gradient. In Sodalis glossinidius (strain morsitans), this protein is NADH-quinone oxidoreductase subunit K.